Reading from the N-terminus, the 222-residue chain is uncharacterized protein (222 aa).

Belongs to the ycf73 family.

It localises to the plastid. Its subcellular location is the chloroplast. This is an uncharacterized protein from Oryza nivara (Indian wild rice).